A 403-amino-acid polypeptide reads, in one-letter code: Large ribosomal subunit protein uL3 (403 aa).

The segment at 1–37 (MSHRKFSAPRHGSLGFLPRKRSSRHRGKVKSFPKDDP) is disordered. At serine 13 the chain carries Phosphoserine. Residues 18–31 (PRKRSSRHRGKVKS) are compositionally biased toward basic residues. Residue lysine 39 forms a Glycyl lysine isopeptide (Lys-Gly) (interchain with G-Cter in SUMO2) linkage. Lysine 136 is modified (N6-acetyllysine). Glycyl lysine isopeptide (Lys-Gly) (interchain with G-Cter in SUMO2) cross-links involve residues lysine 224 and lysine 226. Histidine 245 bears the Tele-methylhistidine mark. 2 positions are modified to N6-acetyllysine; alternate: lysine 286 and lysine 294. Lysine 286 is covalently cross-linked (Glycyl lysine isopeptide (Lys-Gly) (interchain with G-Cter in SUMO2); alternate). Residue lysine 294 forms a Glycyl lysine isopeptide (Lys-Gly) (interchain with G-Cter in SUMO1); alternate linkage. At serine 304 the chain carries Phosphoserine. The residue at position 366 (lysine 366) is an N6-acetyllysine; alternate. Lysine 366 participates in a covalent cross-link: Glycyl lysine isopeptide (Lys-Gly) (interchain with G-Cter in SUMO2); alternate. Lysine 373 carries the post-translational modification N6-acetyllysine. Glycyl lysine isopeptide (Lys-Gly) (interchain with G-Cter in SUMO2) cross-links involve residues lysine 386, lysine 393, and lysine 399.

This sequence belongs to the universal ribosomal protein uL3 family. As to quaternary structure, component of the large ribosomal subunit. Interacts with DHX33. Post-translationally, constitutively monomethylated at His-245 by METTL18. Methylation at His-245 regulates translation elongation by slowing ribosome traversal on tyrosine codons: slower elongation provides enough time for proper folding of synthesized proteins and prevents cellular aggregation of tyrosine-rich proteins. It is not required for incorporation of RPL3 into ribosomes.

The protein resides in the nucleus. It is found in the nucleolus. The protein localises to the cytoplasm. Component of the large ribosomal subunit. The ribosome is a large ribonucleoprotein complex responsible for the synthesis of proteins in the cell. The sequence is that of Large ribosomal subunit protein uL3 (RPL3) from Oryctolagus cuniculus (Rabbit).